The following is a 602-amino-acid chain: MSVEQKYIRNFCIIAHIDHGKSTLADRLLEYTGALSKREMVDQVLDTMDLERERGITIKLQAVRLHYKARDGQEYVLNLIDTPGHVDFTYEVSRSLAACEGALLVVDAAQGIEAQTLANVYLALEHNLEIIPVINKIDLPSAEPERVRREIEDVIGLDASEAILASAKTGVGTEEILEAIIRRVPPPRGDGEAPLQALIFDSIFDSYRGAIPYFRVVQGRVRKGDRIRFMATGAEFEVNEVGVFTPAPRPVESLAAGEVGFLSASIKNVKDTRVGDTITSAERPAPAPLPGYRKVMPMVYCGLFPVESERYDDLRDALEKLQLNDASLTFETETSVALGFGFRCGFLGLLHMEIIQERLEREYGLELITTAPSVVYRVVGTNGSVIMVDNPTALPAPNLIDHIEEPFVEATIMTPKDFVGPVMELCQEKRGSFLNMDYLSEKRVALKYDLPLAEIIYDFFDQLKSRTRGYASLDYSLKGYRPSELVKMDILVNNEVVDALSLITHRDQAYQRGRALVERLRQLIPRQLFDVPIQAAIGSRVIARETIPALRKNVLAKCYGGDVTRKRKLLEKQKEGKKRMKQVGTVDIPQEAFMAVLKAGKS.

Residues 6-188 enclose the tr-type G domain; sequence KYIRNFCIIA…AIIRRVPPPR (183 aa). GTP is bound by residues 18–23 and 135–138; these read DHGKST and NKID.

Belongs to the TRAFAC class translation factor GTPase superfamily. Classic translation factor GTPase family. LepA subfamily.

The protein resides in the cell membrane. It carries out the reaction GTP + H2O = GDP + phosphate + H(+). Its function is as follows. Required for accurate and efficient protein synthesis under certain stress conditions. May act as a fidelity factor of the translation reaction, by catalyzing a one-codon backward translocation of tRNAs on improperly translocated ribosomes. Back-translocation proceeds from a post-translocation (POST) complex to a pre-translocation (PRE) complex, thus giving elongation factor G a second chance to translocate the tRNAs correctly. Binds to ribosomes in a GTP-dependent manner. The protein is Elongation factor 4 of Moorella thermoacetica (strain ATCC 39073 / JCM 9320).